The following is a 137-amino-acid chain: Small ribosomal subunit protein uS11 (137 aa).

The segment at 116 to 137 is disordered; the sequence is EDVTPVPSDSTRKKGGRRGRRL. Basic residues predominate over residues 128 to 137; the sequence is KKGGRRGRRL.

The protein belongs to the universal ribosomal protein uS11 family.

The chain is Small ribosomal subunit protein uS11 (RPS14) from Kluyveromyces lactis (strain ATCC 8585 / CBS 2359 / DSM 70799 / NBRC 1267 / NRRL Y-1140 / WM37) (Yeast).